We begin with the raw amino-acid sequence, 293 residues long: Phosphatidate cytidylyltransferase (293 aa).

8 helical membrane passes run 6–26, 51–71, 73–93, 97–117, 157–177, 195–215, 218–238, and 273–293; these read IISAVIGIALAFSLLILGGWY, IAPAAKTTMVLSLMLLLSATV, PHLTDAFFPLTGALICFYLLF, MATIADISTSLLGLFYGGYLP, LLVTILAFACIWAADIGAYIM, VEGSLWGVGGSLLVGVLGAWY, WPYWEITGALLGLLIGIVSLL, and VFTAPLVYYFVVLLLPVLNNL.

It belongs to the CDS family.

Its subcellular location is the cell membrane. The catalysed reaction is a 1,2-diacyl-sn-glycero-3-phosphate + CTP + H(+) = a CDP-1,2-diacyl-sn-glycerol + diphosphate. The protein operates within phospholipid metabolism; CDP-diacylglycerol biosynthesis; CDP-diacylglycerol from sn-glycerol 3-phosphate: step 3/3. The polypeptide is Phosphatidate cytidylyltransferase (cdsA) (Synechocystis sp. (strain ATCC 27184 / PCC 6803 / Kazusa)).